Here is a 148-residue protein sequence, read N- to C-terminus: Proteasome chaperone 4 (148 aa).

This sequence belongs to the PSMG4 family. Component of the 20S proteasome chaperone. Forms a heterodimer with IRC25 that binds to proteasome precursors. Interacts with POP2.

Its subcellular location is the cytoplasm. Involved in 20S proteasome assembly, facilitating the alpha-ring formation. Involved in maintenance of telomere length. This is Proteasome chaperone 4 (POC4) from Saccharomyces cerevisiae (strain ATCC 204508 / S288c) (Baker's yeast).